The chain runs to 234 residues: Flagellar L-ring protein (234 aa).

Positions 1–15 (MRYAVICMLLLAASG) are cleaved as a signal peptide. Residue C16 is the site of N-palmitoyl cysteine attachment. Residue C16 is the site of S-diacylglycerol cysteine attachment.

The protein belongs to the FlgH family. In terms of assembly, the basal body constitutes a major portion of the flagellar organelle and consists of four rings (L,P,S, and M) mounted on a central rod.

Its subcellular location is the cell outer membrane. The protein resides in the bacterial flagellum basal body. In terms of biological role, assembles around the rod to form the L-ring and probably protects the motor/basal body from shearing forces during rotation. The chain is Flagellar L-ring protein from Oleidesulfovibrio alaskensis (strain ATCC BAA-1058 / DSM 17464 / G20) (Desulfovibrio alaskensis).